Here is a 1774-residue protein sequence, read N- to C-terminus: Protein TIC 214 (1774 aa).

The next 6 helical transmembrane spans lie at 19 to 39 (IINSVVVVGLYYGFLTTFSIG), 68 to 88 (FIAGQLMMFISIYYAPLHLAL), 91 to 111 (PHTITVLALPYLLFHFFWNNH), 133 to 153 (VFLNNLIFQLFNHFILPSSML), 176 to 196 (VGWLIGHILFMKWVGLVLVWI), and 227 to 247 (IFSILLFITCVYYLGRIPSPI). Basic and acidic residues predominate over residues 254–268 (GTSETEERGGTKQDQ). The interval 254–275 (GTSETEERGGTKQDQEVSTEEA) is disordered.

It belongs to the TIC214 family. In terms of assembly, part of the Tic complex.

The protein localises to the plastid. The protein resides in the chloroplast inner membrane. Involved in protein precursor import into chloroplasts. May be part of an intermediate translocation complex acting as a protein-conducting channel at the inner envelope. The chain is Protein TIC 214 from Aethionema cordifolium (Lebanon stonecress).